We begin with the raw amino-acid sequence, 588 residues long: Transcription factor 7-like 1 (588 aa).

Residues 1–31 (MPQLGGGGGGGGGGSGGGGGSSAGAAGGGDD) are compositionally biased toward gly residues. Residues 1–74 (MPQLGGGGGG…VKSSLVNESE (74 aa)) are CTNNB1-binding. Disordered stretches follow at residues 1–101 (MPQL…PRDY), 203–234 (SPGSPPTHLSPEIDPKTGIPRPPHPSELSPYY), and 409–506 (LYPT…LSLT). Low complexity predominate over residues 67-81 (SSLVNESENQSSSSD). Positions 83-101 (EAERRPQPVRDTFQKPRDY) are enriched in basic and acidic residues. A DNA-binding region (HMG box) is located at residues 346–414 (VKKPLNAFML…LHSQLYPTWS (69 aa)). The Nuclear localization signal motif lies at 421–427 (KKKKRKR). Composition is skewed to low complexity over residues 431-441 (LSQTQSQQQVQ) and 478-497 (SPATPSAALASPAAPAATHS).

This sequence belongs to the TCF/LEF family. In terms of assembly, binds the armadillo repeat of CTNNB1 and forms a stable complex. Interacts with DAZAP2. Detected in hair follicles and skin keratinocytes, and at lower levels in stomach epithelium.

Its subcellular location is the nucleus. In terms of biological role, participates in the Wnt signaling pathway. Binds to DNA and acts as a repressor in the absence of CTNNB1, and as an activator in its presence. Necessary for the terminal differentiation of epidermal cells, the formation of keratohyalin granules and the development of the barrier function of the epidermis. Down-regulates NQO1, leading to increased mitomycin c resistance. In Homo sapiens (Human), this protein is Transcription factor 7-like 1 (TCF7L1).